We begin with the raw amino-acid sequence, 237 residues long: Synapse differentiation-inducing gene protein 1-like (237 aa).

3 disordered regions span residues 1-23, 84-111, and 127-148; these read MESL…HRPY, AGSC…PGQA, and ELQG…ESEC. The Extracellular portion of the chain corresponds to 1–161; sequence MESLSELQNP…FLTLPPRDHL (161 aa). Acidic residues predominate over residues 129-148; the sequence is QGQEDSQEEESDGTSSESEC. Residues 162 to 182 traverse the membrane as a helical segment; that stretch reads GLTLFSMLCCFWPLGIAAFYF. Residues 183 to 204 are Cytoplasmic-facing; the sequence is SQGTSKAISKGDFRLASTTSRR. A helical transmembrane segment spans residues 205–225; that stretch reads ALFLATLSIAVGAGLYVAVVV. The Extracellular portion of the chain corresponds to 226–237; that stretch reads ALAAYMSQNGHG.

It belongs to the CD225/Dispanin family. Expression is restricted to the caudate-putamen. Down-regulated in R6/2 transgenic mice, a model for Huntington disease.

Its subcellular location is the membrane. The protein resides in the golgi apparatus. The protein localises to the cis-Golgi network. The polypeptide is Synapse differentiation-inducing gene protein 1-like (Syndig1l) (Mus musculus (Mouse)).